Consider the following 438-residue polypeptide: Glutamate-1-semialdehyde 2,1-aminomutase (438 aa).

An N6-(pyridoxal phosphate)lysine modification is found at Lys-274.

This sequence belongs to the class-III pyridoxal-phosphate-dependent aminotransferase family. HemL subfamily. As to quaternary structure, homodimer. Pyridoxal 5'-phosphate is required as a cofactor.

The protein localises to the cytoplasm. The catalysed reaction is (S)-4-amino-5-oxopentanoate = 5-aminolevulinate. The protein operates within porphyrin-containing compound metabolism; protoporphyrin-IX biosynthesis; 5-aminolevulinate from L-glutamyl-tRNA(Glu): step 2/2. The chain is Glutamate-1-semialdehyde 2,1-aminomutase from Salinibacter ruber (strain DSM 13855 / M31).